Here is a 123-residue protein sequence, read N- to C-terminus: Small ribosomal subunit protein uS13 (123 aa).

A disordered region spans residues 93–123; that stretch reads RRNLPVRGQKTKTNARTRKGPKRAIGGKKKK.

This sequence belongs to the universal ribosomal protein uS13 family. As to quaternary structure, part of the 30S ribosomal subunit. Forms a loose heterodimer with protein S19. Forms two bridges to the 50S subunit in the 70S ribosome.

Its function is as follows. Located at the top of the head of the 30S subunit, it contacts several helices of the 16S rRNA. In the 70S ribosome it contacts the 23S rRNA (bridge B1a) and protein L5 of the 50S subunit (bridge B1b), connecting the 2 subunits; these bridges are implicated in subunit movement. Contacts the tRNAs in the A and P-sites. The protein is Small ribosomal subunit protein uS13 of Clostridium botulinum (strain Kyoto / Type A2).